Consider the following 447-residue polypeptide: F-box only protein 5 (447 aa).

Residues Ser-94 and Ser-102 each carry the phosphoserine modification. An interaction with EVI5 region spans residues 135–244; the sequence is ALETSRLYED…IGRKMGLECV (110 aa). One can recognise an F-box domain in the interval 250 to 296; sequence LFRRGLRHVLATILAQLSDMDLINVSKVSTTWKKILEDDKGAFQLYS. The segment at 261–339 is sufficient for interaction with RPS6KA2; Prevents association of CDC20 with RPS6KA2; it reads TILAQLSDMD…KSAAQTSLKK (79 aa). Residues 261 to 409 form a requires for efficient binding to CDC20 region; the sequence is TILAQLSDMD…GCGFDYCTKC (149 aa). An inhibits APC ubiquitin ligase activity region spans residues 305-447; it reads NNNKFSPHAS…KKSKKNLRRL (143 aa). Positions 322–325 are competitively blocks access of APC substrates to the D-box coreceptor formed by FZR1 and ANAPC10; it reads RTPL. The tract at residues 337-358 is disordered; it reads LKKDAQTKLSNQGDQKGSTYSR. The segment covering 343-357 has biased composition (polar residues); the sequence is TKLSNQGDQKGSTYS. The segment at 374-422 adopts a ZBR-type zinc-finger fold; sequence SLKACIRCNSPAKYDCYLQRATCKREGCGFDYCTKCLCNYHTTKDCSDG. Residues Cys-378, Cys-381, Cys-396, Cys-401, Cys-406, Cys-409, His-414, and Cys-419 each contribute to the Zn(2+) site. The allows a rapid multiple mono-ubiquitination of the APC substrate, but strongly inhibits the slow ubiquitin chain elongation catalyzed by UBCH10 stretch occupies residues 378–420; sequence CIRCNSPAKYDCYLQRATCKREGCGFDYCTKCLCNYHTTKDCS. Positions 437–447 are sufficient to suppress UBE2S activity; essential for interaction with UBE2S; competitively inhibits the rapide ubiquitin chain elongation by UBE2D1 which blocks UBE2D1 with APC; indispensable for recruitment and position of FBXO5 to the catalytic site of APC; abrogates the inhibition of ubiquitin chain assembly primarily catalyzed by UBE2S; inhibits the ubiquitination by either UBE2C or UBE2D1; it reads TKKSKKNLRRL.

As to quaternary structure, part of a SCF (SKP1-cullin-F-box) protein ligase complex. Interacts with BTRC; mediates proteolysis by the SCF ubiquitin ligase complex leading to activation of APC in late mitosis and subsequent mitotic progression. Interacts with FZR1/CDH1 and the N-terminal substrate-binding domain of CDC20; prevents APC activation. Also interacts with EVI5 which blocks its phosphorylation by PLK1 and prevents its subsequent binding to BTRC and degradation. Interacts simultaneously with anaphase promoting complex (APC), through at least ANAPC2, CDC23, CDC27, the APC substrate GMNN and the APC activator FZR1. Interacts with UBE2S; interferes with the activity of UBE2S mainly by disrupting the dynamic electrostatic association between the C-terminal tail of UBE2S and ANAPC2. Interacts with RPS6KA2; cooperates to induce the metaphase arrest of early blastomeres; increases and stabilizes interaction of FBXO5 with CDC20. Phosphorylation by CDK2 and subsequently by PLK1 triggers degradation during early mitosis through ubiquitin-mediated proteolysis by the SCF ubiquitin ligase complex containing the F-box protein BTRC. This degradation is necessary for the activation of APC in late mitosis and subsequent mitotic progression. Phosphorylated by RPS6KA2; increases and stabilizes interaction with CDC20. Post-translationally, ubiquitinated by the SCF(BTRC) complex following phosphorylation by PLK1. Undergoes both 'Lys-11' and 'Lys-48'-linked polyubiquitination by APC-FZR1 complex leading to degradation by proteasome during G1 phase. Degraded through the SCF(BTRC) complex; degradation occurs during oocyte maturation, between germinal vesicle breakdown (GVBD) and meiosis I, and is required for the meiosis I-meiosis II transition.

The protein localises to the nucleus. It localises to the cytoplasm. The protein resides in the cytoskeleton. It is found in the spindle. It functions in the pathway protein modification; protein ubiquitination. In terms of biological role, regulator of APC activity during mitotic and meiotic cell cycle. During mitotic cell cycle plays a role as both substrate and inhibitor of APC-FZR1 complex. During G1 phase, plays a role as substrate of APC-FZR1 complex E3 ligase. Then switches as an inhibitor of APC-FZR1 complex during S and G2 leading to cell-cycle commitment. As APC inhibitor, prevents the degradation of APC substrates at multiple levels: by interacting with APC and blocking access of APC substrates to the D-box coreceptor, formed by FZR1 and ANAPC10; by suppressing ubiquitin ligation and chain elongation by APC by preventing the UBE2C and UBE2S activities. Plays a role in genome integrity preservation by coordinating DNA replication with mitosis through APC inhibition in interphase to stabilize CCNA2 and GMNN in order to promote mitosis and prevent rereplication and DNA damage-induced cellular senescence. During oocyte maturation, plays a role in meiosis through inactivation of APC-FZR1 complex. Inhibits APC through RPS6KA2 interaction that increases FBXO5 affiniy for CDC20 leading to the metaphase arrest of the second meiotic division before fertilization. Controls entry into the first meiotic division through inactivation of APC-FZR1 complex. Promotes migration and osteogenic differentiation of mesenchymal stem cells. The protein is F-box only protein 5 of Homo sapiens (Human).